Reading from the N-terminus, the 310-residue chain is Lipoyl synthase (310 aa).

Residues Cys45, Cys50, Cys56, Cys71, Cys75, Cys78, and Ser285 each contribute to the [4Fe-4S] cluster site. The region spanning 57-274 (WTKKHATVMI…GSIARAKGFL (218 aa)) is the Radical SAM core domain.

This sequence belongs to the radical SAM superfamily. Lipoyl synthase family. [4Fe-4S] cluster serves as cofactor.

Its subcellular location is the cytoplasm. It catalyses the reaction [[Fe-S] cluster scaffold protein carrying a second [4Fe-4S](2+) cluster] + N(6)-octanoyl-L-lysyl-[protein] + 2 oxidized [2Fe-2S]-[ferredoxin] + 2 S-adenosyl-L-methionine + 4 H(+) = [[Fe-S] cluster scaffold protein] + N(6)-[(R)-dihydrolipoyl]-L-lysyl-[protein] + 4 Fe(3+) + 2 hydrogen sulfide + 2 5'-deoxyadenosine + 2 L-methionine + 2 reduced [2Fe-2S]-[ferredoxin]. The protein operates within protein modification; protein lipoylation via endogenous pathway; protein N(6)-(lipoyl)lysine from octanoyl-[acyl-carrier-protein]: step 2/2. Functionally, catalyzes the radical-mediated insertion of two sulfur atoms into the C-6 and C-8 positions of the octanoyl moiety bound to the lipoyl domains of lipoate-dependent enzymes, thereby converting the octanoylated domains into lipoylated derivatives. The sequence is that of Lipoyl synthase from Novosphingobium aromaticivorans (strain ATCC 700278 / DSM 12444 / CCUG 56034 / CIP 105152 / NBRC 16084 / F199).